We begin with the raw amino-acid sequence, 569 residues long: Laccase-13 (569 aa).

An N-terminal signal peptide occupies residues 1-21; it reads MEQLRPFFLLLAIFVASLVNA. Plastocyanin-like domains lie at 29–145 and 157–308; these read VIQE…PPLS and REIT…YKDA. Asparagine 75 carries N-linked (GlcNAc...) asparagine glycosylation. Cu cation contacts are provided by histidine 79, histidine 81, histidine 124, and histidine 126. Asparagine 186, asparagine 296, asparagine 330, asparagine 381, asparagine 391, and asparagine 432 each carry an N-linked (GlcNAc...) asparagine glycan. In terms of domain architecture, Plastocyanin-like 3 spans 418-553; the sequence is DFPPTPPVTF…AMVFLVENGE (136 aa). Cu cation is bound by residues histidine 470, histidine 473, histidine 475, histidine 532, cysteine 533, histidine 534, and histidine 538.

Belongs to the multicopper oxidase family. It depends on Cu cation as a cofactor. As to expression, mostly expressed in roots. Also detected in leaves, stems and flowers but not in siliques.

The protein resides in the secreted. Its subcellular location is the extracellular space. The protein localises to the apoplast. It carries out the reaction 4 hydroquinone + O2 = 4 benzosemiquinone + 2 H2O. In terms of biological role, lignin degradation and detoxification of lignin-derived products. The polypeptide is Laccase-13 (LAC13) (Arabidopsis thaliana (Mouse-ear cress)).